The chain runs to 575 residues: Proline--tRNA ligase (575 aa).

It belongs to the class-II aminoacyl-tRNA synthetase family. ProS type 1 subfamily. As to quaternary structure, homodimer.

The protein resides in the cytoplasm. It carries out the reaction tRNA(Pro) + L-proline + ATP = L-prolyl-tRNA(Pro) + AMP + diphosphate. In terms of biological role, catalyzes the attachment of proline to tRNA(Pro) in a two-step reaction: proline is first activated by ATP to form Pro-AMP and then transferred to the acceptor end of tRNA(Pro). As ProRS can inadvertently accommodate and process non-cognate amino acids such as alanine and cysteine, to avoid such errors it has two additional distinct editing activities against alanine. One activity is designated as 'pretransfer' editing and involves the tRNA(Pro)-independent hydrolysis of activated Ala-AMP. The other activity is designated 'posttransfer' editing and involves deacylation of mischarged Ala-tRNA(Pro). The misacylated Cys-tRNA(Pro) is not edited by ProRS. The chain is Proline--tRNA ligase from Solidesulfovibrio magneticus (strain ATCC 700980 / DSM 13731 / RS-1) (Desulfovibrio magneticus).